A 196-amino-acid chain; its full sequence is uncharacterized protein (196 aa).

CBS domains follow at residues A10–E69 and M76–T132. Positions I153–R187 constitute an ACP-type MB domain. The Fe cation site is built by C158, C161, C177, and C180. Zn(2+) is bound by residues C158, C161, C177, and C180.

This is an uncharacterized protein from Methanopyrus kandleri (strain AV19 / DSM 6324 / JCM 9639 / NBRC 100938).